Here is a 593-residue protein sequence, read N- to C-terminus: Solute carrier family 13 member 2 (593 aa).

4 consecutive transmembrane segments (helical) span residues 11 to 31, 53 to 73, 86 to 106, and 121 to 141; these read YRMY…PILV, ALPL…MGIM, TNVL…WNLH, and PALL…WISN. A compositionally biased stretch (polar residues) spans 164 to 184; sequence SNVEEGSDNPTFELQEPSPQK. The interval 164 to 204 is disordered; it reads SNVEEGSDNPTFELQEPSPQKETSKVDEKDNGQAQPLPAVP. Residues 185-194 show a composition bias toward basic and acidic residues; sequence ETSKVDEKDN. 8 helical membrane passes run 221–241, 270–290, 327–347, 369–389, 451–471, 485–505, 514–534, and 543–563; these read GMSL…LTGT, FAFP…QILF, PMSF…LLWF, VMVS…MVPS, LMPL…LLVA, LLLP…LYVM, LAFM…FGGL, and GIML…SWGV.

The protein belongs to the SLC13A/DASS transporter (TC 2.A.47) family. NADC subfamily. In terms of tissue distribution, abundant in kidney and small intestine.

It is found in the apical cell membrane. The catalysed reaction is succinate(out) + 3 Na(+)(out) = succinate(in) + 3 Na(+)(in). It catalyses the reaction fumarate(out) + 3 Na(+)(out) = fumarate(in) + 3 Na(+)(in). The enzyme catalyses 2-oxoglutarate(out) + 3 Na(+)(out) = 2-oxoglutarate(in) + 3 Na(+)(in). With respect to regulation, li(+) decreases succinate transport in the presence of Na(+), by competing at one of the three cation binding sites. In terms of biological role, low-affinity sodium-dicarboxylate cotransporter, that mediates the entry of citric acid cycle intermediates, such as succinate, citrate, fumarate and alpha-ketoglutarate (2-oxoglutarate) into the small intestine and renal proximal tubule. Transports the dicarboxylate into the cell with a probable stoichiometry of 3 Na(+) for 1 divalent dicarboxylate, rendering the process electrogenic. Citrate is transported in protonated form as a divalent anion, rather than the trivalent form which is normally found in blood. Has a critical role in renal dicarboxylate transport. This chain is Solute carrier family 13 member 2 (SLC13A2), found in Oryctolagus cuniculus (Rabbit).